A 270-amino-acid polypeptide reads, in one-letter code: Phosphatidylinositol transfer protein alpha isoform (270 aa).

Thr-58, Lys-60, Glu-85, Asn-89, Thr-96, and Lys-194 together coordinate a 1,2-diacyl-sn-glycero-3-phospho-(1D-myo-inositol). Lys-215 bears the N6-acetyllysine mark.

The protein belongs to the PtdIns transfer protein family. PI transfer class I subfamily. In terms of processing, phosphorylated by PKC in a calcium and phosphatidylserine-dependent manner.

Its subcellular location is the cytoplasm. The protein resides in the nucleus. It catalyses the reaction a 1,2-diacyl-sn-glycero-3-phosphocholine(in) = a 1,2-diacyl-sn-glycero-3-phosphocholine(out). The enzyme catalyses a 1,2-diacyl-sn-glycero-3-phospho-(1D-myo-inositol)(in) = a 1,2-diacyl-sn-glycero-3-phospho-(1D-myo-inositol)(out). In terms of biological role, catalyzes the transfer of phosphatidylinositol (PI) and phosphatidylcholine (PC) between membranes. Shows a preference for PI and PC containing shorter saturated or monosaturated acyl chains at the sn-1 and sn-2 positions. Preference order for PC is C16:1 &gt; C16:0 &gt; C18:1 &gt; C18:0 &gt; C20:4 and for PI is C16:1 &gt; C16:0 &gt; C18:1 &gt; C18:0 &gt; C20:4 &gt; C20:3. In Bos taurus (Bovine), this protein is Phosphatidylinositol transfer protein alpha isoform (PITPNA).